Consider the following 488-residue polypeptide: Probable malate:quinone oxidoreductase (488 aa).

The protein belongs to the MQO family. FAD is required as a cofactor.

It catalyses the reaction (S)-malate + a quinone = a quinol + oxaloacetate. The protein operates within carbohydrate metabolism; tricarboxylic acid cycle; oxaloacetate from (S)-malate (quinone route): step 1/1. This chain is Probable malate:quinone oxidoreductase, found in Neisseria meningitidis serogroup C (strain 053442).